We begin with the raw amino-acid sequence, 292 residues long: 4-hydroxy-tetrahydrodipicolinate synthase (292 aa).

T45 provides a ligand contact to pyruvate. Y133 acts as the Proton donor/acceptor in catalysis. K161 functions as the Schiff-base intermediate with substrate in the catalytic mechanism. Residue I203 participates in pyruvate binding.

The protein belongs to the DapA family. In terms of assembly, homotetramer; dimer of dimers.

The protein localises to the cytoplasm. It carries out the reaction L-aspartate 4-semialdehyde + pyruvate = (2S,4S)-4-hydroxy-2,3,4,5-tetrahydrodipicolinate + H2O + H(+). Its pathway is amino-acid biosynthesis; L-lysine biosynthesis via DAP pathway; (S)-tetrahydrodipicolinate from L-aspartate: step 3/4. Its function is as follows. Catalyzes the condensation of (S)-aspartate-beta-semialdehyde [(S)-ASA] and pyruvate to 4-hydroxy-tetrahydrodipicolinate (HTPA). The protein is 4-hydroxy-tetrahydrodipicolinate synthase of Nitrosomonas europaea (strain ATCC 19718 / CIP 103999 / KCTC 2705 / NBRC 14298).